The primary structure comprises 148 residues: Protein H2A.6 (148 aa).

A disordered region spans residues 120–148 (GAAEKESTKSPKKKAATKSPKKKTAATKE). 2 short sequence motifs (SPKK motif) span residues 129 to 132 (SPKK) and 138 to 141 (SPKK). Residues 129-148 (SPKKKAATKSPKKKTAATKE) show a composition bias toward basic residues.

The protein belongs to the histone H2A family. In terms of assembly, the nucleosome is a histone octamer containing two molecules each of H2A, H2B, H3 and H4 assembled in one H3-H4 heterotetramer and two H2A-H2B heterodimers. The octamer wraps approximately 147 bp of DNA. In terms of tissue distribution, abundant in meristematic tissues.

It is found in the nucleus. The protein resides in the chromosome. Core component of nucleosome. Nucleosomes wrap and compact DNA into chromatin, limiting DNA accessibility to the cellular machineries which require DNA as a template. Histones thereby play a central role in transcription regulation, DNA repair, DNA replication and chromosomal stability. DNA accessibility is regulated via a complex set of post-translational modifications of histones, also called histone code, and nucleosome remodeling. In Triticum aestivum (Wheat), this protein is Protein H2A.6 (H2A-3).